Reading from the N-terminus, the 264-residue chain is Apolipoprotein A-I (264 aa).

A signal peptide spans 1–18 (MRVVVVTLALLFLTGTQA). 2 consecutive repeat copies span residues 67–88 (LKLA…EDMA) and 89–110 (PYYK…AELT). The segment at 67–264 (LKLADNLDTL…LLDELQKTVA (198 aa)) is 10 X approximate tandem repeats. The stretch at 111-121 (KDLEEVKEKIR) is one 3; half-length repeat. 5 consecutive repeat copies span residues 122 to 143 (PFLD…QRLA), 144 to 165 (PVAE…QKLT), 166 to 187 (PVAE…KNLA), 188 to 209 (PYSD…EKGI), and 210 to 231 (PQAA…EKMT). A 9; half-length repeat occupies 232–242 (PLVQDFKERLT). Copy 10 of the repeat occupies 243-264 (PYAENLKTRFISLLDELQKTVA).

This sequence belongs to the apolipoprotein A1/A4/E family. As to expression, major protein of plasma HDL, also found in chylomicrons.

Its subcellular location is the secreted. In terms of biological role, participates in the reverse transport of cholesterol from tissues to the liver for excretion by promoting cholesterol efflux from tissues and by acting as a cofactor for the lecithin cholesterol acyltransferase (LCAT). The polypeptide is Apolipoprotein A-I (APOA1) (Anas platyrhynchos (Mallard)).